The primary structure comprises 198 residues: Probable GTP-binding protein EngB (198 aa).

One can recognise an EngB-type G domain in the interval 36 to 198; sequence SDPQFAFIGR…NLSKLQELLE (163 aa). Residues 44–51, 70–74, 88–91, 155–158, and 182–184 each bind GTP; these read GRSNVGKS, GRTQL, DLPG, NKID, and ISA. Residues S51 and T72 each coordinate Mg(2+).

It belongs to the TRAFAC class TrmE-Era-EngA-EngB-Septin-like GTPase superfamily. EngB GTPase family. The cofactor is Mg(2+).

Necessary for normal cell division and for the maintenance of normal septation. This chain is Probable GTP-binding protein EngB, found in Mesomycoplasma hyopneumoniae (strain 7448) (Mycoplasma hyopneumoniae).